The chain runs to 63 residues: Protein DsrB (63 aa).

It belongs to the DsrB family.

This is Protein DsrB from Yersinia pseudotuberculosis serotype O:1b (strain IP 31758).